An 887-amino-acid polypeptide reads, in one-letter code: Valine--tRNA ligase (887 aa).

The 'HIGH' region motif lies at P48–H58. The 'KMSKS' region motif lies at K527–S531. Position 530 (K530) interacts with ATP. Positions L814–S887 form a coiled coil.

Belongs to the class-I aminoacyl-tRNA synthetase family. ValS type 1 subfamily. In terms of assembly, monomer.

It is found in the cytoplasm. It catalyses the reaction tRNA(Val) + L-valine + ATP = L-valyl-tRNA(Val) + AMP + diphosphate. Its function is as follows. Catalyzes the attachment of valine to tRNA(Val). As ValRS can inadvertently accommodate and process structurally similar amino acids such as threonine, to avoid such errors, it has a 'posttransfer' editing activity that hydrolyzes mischarged Thr-tRNA(Val) in a tRNA-dependent manner. The polypeptide is Valine--tRNA ligase (Desulfotalea psychrophila (strain LSv54 / DSM 12343)).